We begin with the raw amino-acid sequence, 330 residues long: DNA-binding death effector domain-containing protein 2 (330 aa).

The region spanning 25 to 104 (SLHRMFEVVG…RHDLLPHLAR (80 aa)) is the DED domain. Residues 104–109 (RKRRRP) carry the Nuclear localization signal motif. The interval 104–195 (RKRRRPVSPE…HQELGRPSSE (92 aa)) is disordered. Residues 137-147 (ASSSSDSPQSQ) show a composition bias toward low complexity. Residues 156–174 (KRQRRSRGRPSSGARQRRR) carry the Bipartite nuclear localization signal motif.

In terms of assembly, interacts with CASP8, CASP10 and GTF3C3. Homodimerizes and heterodimerizes with DEDD. As to expression, expression is high in liver, heart, kidney, and testis but low in brain, spleen, lung, and skeleton muscle.

It localises to the nucleus. Its subcellular location is the nucleolus. Functionally, may play a critical role in death receptor-induced apoptosis and may target CASP8 and CASP10 to the nucleus. May regulate degradation of intermediate filaments during apoptosis. May play a role in the general transcription machinery in the nucleus and might be an important regulator of the activity of GTF3C3. In Mus musculus (Mouse), this protein is DNA-binding death effector domain-containing protein 2 (Dedd2).